The chain runs to 839 residues: Translation initiation factor IF-2 (839 aa).

Basic and acidic residues-rich tracts occupy residues 1–12 and 57–67; these read MSDNEIKNETPK and AEAKAQEKQAA. Disordered regions lie at residues 1–21 and 57–244; these read MSDN…RRTK and AEAK…GASL. Over residues 68 to 90 the composition is skewed to low complexity; that stretch reads EKAAQAQTEAKAQTEQACTTKKT. Basic and acidic residues-rich tracts occupy residues 104–167, 185–199, and 212–233; these read PKTE…REET, READ…EGNR, and GGRE…DIKG. The region spanning 338 to 508 is the tr-type G domain; that stretch reads TRAPVVTIMG…ILQSEVLELT (171 aa). The G1 stretch occupies residues 347–354; that stretch reads GHVDHGKT. 347-354 serves as a coordination point for GTP; sequence GHVDHGKT. The G2 stretch occupies residues 372–376; the sequence is GITQH. Residues 394–397 form a G3 region; that stretch reads DTPG. GTP contacts are provided by residues 394–398 and 448–451; these read DTPGH and NKID. Residues 448 to 451 form a G4 region; that stretch reads NKID. A G5 region spans residues 484 to 486; the sequence is SAK.

The protein belongs to the TRAFAC class translation factor GTPase superfamily. Classic translation factor GTPase family. IF-2 subfamily.

It is found in the cytoplasm. One of the essential components for the initiation of protein synthesis. Protects formylmethionyl-tRNA from spontaneous hydrolysis and promotes its binding to the 30S ribosomal subunits. Also involved in the hydrolysis of GTP during the formation of the 70S ribosomal complex. In Haemophilus ducreyi (strain 35000HP / ATCC 700724), this protein is Translation initiation factor IF-2.